We begin with the raw amino-acid sequence, 814 residues long: Telomere repeats-binding bouquet formation protein 1 (814 aa).

2 ARM repeats span residues Glu93 to Arg136 and Gly327 to Thr368. 3 disordered regions span residues Asp461–Arg521, Ser551–Asp584, and Phe653–Asn753. Positions Glu488–Glu512 form a coiled coil. Basic and acidic residues-rich tracts occupy residues Arg499–Arg521, Ile565–Arg577, and Glu679–Lys688. Residues Gln689–Ser699 show a composition bias toward basic residues. Residues Arg714–Ser741 are compositionally biased toward basic and acidic residues. The Myb-like domain occupies Gly746–Gln799.

The protein belongs to the TERB1 family. Component of the MAJIN-TERB1-TERB2 complex.

The protein localises to the chromosome. Its subcellular location is the telomere. The protein resides in the nucleus inner membrane. Meiosis-specific telomere-associated protein involved in meiotic telomere attachment to the nucleus inner membrane, a crucial step for homologous pairing and synapsis. Component of the MAJIN-TERB1-TERB2 complex, which promotes telomere cap exchange by mediating attachment of telomeric DNA to the inner nuclear membrane and replacement of the protective cap of telomeric chromosomes: in early meiosis, the MAJIN-TERB1-TERB2 complex associates with telomeric DNA and the shelterin/telosome complex. During prophase, the complex matures and promotes release of the shelterin/telosome complex from telomeric DNA. In the MAJIN-TERB1-TERB2 complex, TERB1 probably mediates association with the shelterin/telosome complex. The sequence is that of Telomere repeats-binding bouquet formation protein 1 (ccdc79) from Danio rerio (Zebrafish).